Reading from the N-terminus, the 198-residue chain is Probable GTP-binding protein EngB (198 aa).

Residues 27 to 198 (DLPEVALAGR…ESWDTILSEL (172 aa)) form the EngB-type G domain. GTP-binding positions include 35–42 (GRSNVGKS), 62–66 (GKTQL), 80–83 (DVPG), 147–150 (TKAD), and 179–181 (FSS). 2 residues coordinate Mg(2+): Ser-42 and Thr-64.

It belongs to the TRAFAC class TrmE-Era-EngA-EngB-Septin-like GTPase superfamily. EngB GTPase family. Mg(2+) serves as cofactor.

Necessary for normal cell division and for the maintenance of normal septation. The polypeptide is Probable GTP-binding protein EngB (Streptococcus agalactiae serotype III (strain NEM316)).